A 123-amino-acid polypeptide reads, in one-letter code: uncharacterized protein (123 aa).

A compositionally biased stretch (polar residues) spans 1-12; it reads MALNNVSLSSGD. Disordered regions lie at residues 1–25 and 53–91; these read MALNNVSLSSGDQRSRVAYRSSHGD and PRQAVRPSVRAESRRVDGGGRSPREPDGRGRSRQARFSP. Residues 61–82 show a composition bias toward basic and acidic residues; that stretch reads VRAESRRVDGGGRSPREPDGRG.

This is an uncharacterized protein from Homo sapiens (Human).